The following is a 152-amino-acid chain: Lipoprotein signal peptidase (152 aa).

2 helical membrane-spanning segments follow: residues 55 to 75 (NKMW…VFYM) and 85 to 105 (LGIS…DRVF). Catalysis depends on residues Asp-111 and Asp-129. Residues 124-144 (VFNIADSALCIGVVLIIIQTV) traverse the membrane as a helical segment.

The protein belongs to the peptidase A8 family.

The protein resides in the cell membrane. It catalyses the reaction Release of signal peptides from bacterial membrane prolipoproteins. Hydrolyzes -Xaa-Yaa-Zaa-|-(S,diacylglyceryl)Cys-, in which Xaa is hydrophobic (preferably Leu), and Yaa (Ala or Ser) and Zaa (Gly or Ala) have small, neutral side chains.. The protein operates within protein modification; lipoprotein biosynthesis (signal peptide cleavage). This protein specifically catalyzes the removal of signal peptides from prolipoproteins. This Bacillus mycoides (strain KBAB4) (Bacillus weihenstephanensis) protein is Lipoprotein signal peptidase.